Reading from the N-terminus, the 320-residue chain is Pyrroline-5-carboxylate reductase 2 (320 aa).

Position 2 is an N-acetylserine (Ser-2). Residues 6–11 (IGAGQL) and Ser-34 each bind NADP(+). Residues Ala-8, Gln-10, Leu-11, Ser-34, Glu-36, Asn-56, Val-70, Lys-71, and Ala-97 each contribute to the NADPH site. NADP(+) contacts are provided by residues Asn-56, 69-72 (AVKP), and 95-97 (CAA). Glu-164 provides a ligand contact to L-proline. Asn-230 provides a ligand contact to NADPH. L-proline is bound by residues Ala-237 and Thr-238. The span at 295–305 (PTVSTLTPSSP) shows a compositional bias: low complexity. Residues 295–320 (PTVSTLTPSSPGKLLTRSLALGGKKD) form a disordered region. The residue at position 304 (Ser-304) is a Phosphoserine.

It belongs to the pyrroline-5-carboxylate reductase family. In terms of assembly, homodecamer; composed of 5 homodimers. Interacts with LTO1. As to expression, detected in erythrocytes (at protein level). Expressed in fetal brain.

It is found in the cytoplasm. The protein localises to the mitochondrion. The catalysed reaction is L-proline + NADP(+) = (S)-1-pyrroline-5-carboxylate + NADPH + 2 H(+). It catalyses the reaction L-proline + NAD(+) = (S)-1-pyrroline-5-carboxylate + NADH + 2 H(+). It functions in the pathway amino-acid biosynthesis; L-proline biosynthesis; L-proline from L-glutamate 5-semialdehyde: step 1/1. Subject to competitive inhibition by NADP. Was reported not to be inhibited by proline. However other study demonstrated an inhibition by proline. Oxidoreductase that catalyzes the last step in proline biosynthesis, which corresponds to the reduction of pyrroline-5-carboxylate to L-proline using NAD(P)H. At physiologic concentrations, has higher specific activity in the presence of NADH. Involved in cellular response to oxidative stress. In some cell types, such as erythrocytes, its primary function may be the generation of NADP(+). This is Pyrroline-5-carboxylate reductase 2 from Homo sapiens (Human).